Consider the following 317-residue polypeptide: MGMVRHTNESNLAGFILLGFSDYPQLQKVLFVLILILYLLTILGNTTIILVSRLEPKLHMPMYFFLSHLSFLYRCFTSSVIPQLLVNLWEPMKTIAYGGCLVHLYNSHALGSTECVLPAVMSCDRYVAVCRPLHYTVLMHIHLCMALASMAWLSGIATTLVQSTLTLQLPFCGHRQVDHFICEVPVLIKLACVGTTFNEAELFVASILFLIVPVSFILVSSGYIAHAVLRIKSATRRQKAFGTCFSHLTVVTIFYGTIIFMYLQPAKSRSRDQGKFVSLFYTVVTRMLNPLIYTLRIKEVKGALKKVLAKALGVNIL.

The Extracellular segment spans residues 1–28 (MGMVRHTNESNLAGFILLGFSDYPQLQK). N8 carries an N-linked (GlcNAc...) asparagine glycan. A helical transmembrane segment spans residues 29–52 (VLFVLILILYLLTILGNTTIILVS). The Cytoplasmic portion of the chain corresponds to 53–60 (RLEPKLHM). The helical transmembrane segment at 61 to 82 (PMYFFLSHLSFLYRCFTSSVIP) threads the bilayer. The Extracellular portion of the chain corresponds to 83-103 (QLLVNLWEPMKTIAYGGCLVH). A disulfide bond links C100 and C192. A helical transmembrane segment spans residues 104–123 (LYNSHALGSTECVLPAVMSC). Over 124-142 (DRYVAVCRPLHYTVLMHIH) the chain is Cytoplasmic. The helical transmembrane segment at 143-161 (LCMALASMAWLSGIATTLV) threads the bilayer. Residues 162–198 (QSTLTLQLPFCGHRQVDHFICEVPVLIKLACVGTTFN) are Extracellular-facing. The helical transmembrane segment at 199-222 (EAELFVASILFLIVPVSFILVSSG) threads the bilayer. Topologically, residues 223–239 (YIAHAVLRIKSATRRQK) are cytoplasmic. The helical transmembrane segment at 240-262 (AFGTCFSHLTVVTIFYGTIIFMY) threads the bilayer. At 263 to 275 (LQPAKSRSRDQGK) the chain is on the extracellular side. A helical transmembrane segment spans residues 276-295 (FVSLFYTVVTRMLNPLIYTL). At 296 to 317 (RIKEVKGALKKVLAKALGVNIL) the chain is on the cytoplasmic side.

This sequence belongs to the G-protein coupled receptor 1 family.

It is found in the cell membrane. Odorant receptor. In Homo sapiens (Human), this protein is Olfactory receptor 2G2 (OR2G2).